Consider the following 242-residue polypeptide: Segregation and condensation protein A (242 aa).

The protein belongs to the ScpA family. As to quaternary structure, component of a cohesin-like complex composed of ScpA, ScpB and the Smc homodimer, in which ScpA and ScpB bind to the head domain of Smc. The presence of the three proteins is required for the association of the complex with DNA.

It localises to the cytoplasm. Its function is as follows. Participates in chromosomal partition during cell division. May act via the formation of a condensin-like complex containing Smc and ScpB that pull DNA away from mid-cell into both cell halves. The protein is Segregation and condensation protein A of Lactococcus lactis subsp. cremoris (strain MG1363).